The following is a 184-amino-acid chain: Putative lyase MJ0807 (184 aa).

The protein belongs to the chorismate pyruvate-lyase type 2 family.

The sequence is that of Putative lyase MJ0807 from Methanocaldococcus jannaschii (strain ATCC 43067 / DSM 2661 / JAL-1 / JCM 10045 / NBRC 100440) (Methanococcus jannaschii).